The primary structure comprises 1106 residues: Protein transport protein Sec31A (1106 aa).

WD repeat units lie at residues 4 to 47, 68 to 111, 120 to 160, 166 to 206, 209 to 254, 258 to 298, and 301 to 342; these read KEVD…EIFE, RYHK…AGDK, KHTG…TPMT, QPPE…PIIK, DHSN…SPLR, NHAR…VLYE, and TNTQ…DGLR. The interval 161–471 is interaction with SEC13; it reads PGAKTQPPED…IDASQTEFEK (311 aa). The WD 8; interaction with SEC13 repeat unit spans residues 397–430; it reads SFSFGGKLVTFENVRMPSHQGAEQQQQQHHVFIS. Residues S527 and S532 each carry the phosphoserine modification. Residue K647 forms a Glycyl lysine isopeptide (Lys-Gly) (interchain with G-Cter in ubiquitin) linkage. Residue S799 is modified to Phosphoserine. An interaction with PDCD6 region spans residues 800-999; it reads PKIPYEEQQL…TKKITKKPIP (200 aa). An ALG-2-binding site motif-2 (ABS-2) motif is present at residues 842-848; it reads GFIMHGN. Residues 859–980 form a disordered region; it reads TSPGHMHTQV…EGAPGAPIGN (122 aa). Residues 917-939 show a composition bias toward polar residues; sequence PQSQMLQQQPSAPVPLSSQSSFP. A Phosphothreonine modification is found at T1047. Position 1049 is a phosphoserine (S1049). A Glycyl lysine isopeptide (Lys-Gly) (interchain with G-Cter in ubiquitin) cross-link involves residue K1103.

It belongs to the WD repeat SEC31 family. In terms of assembly, COPII is composed of at least 5 proteins: the SEC23/24 complex, the SEC13/31 complex and SAR1. SEC13 and SEC31 make a 2:2 tetramer that forms the edge element of the COPII outer coat. The tetramer self-assembles in multiple copies to form the complete polyhedral cage. Interacts (via WD 8) with SEC13. Interacts with PDCD6; interaction takes place in response to cytosolic calcium increase and leads to bridge together the BCR(KLHL12) complex and SEC31A, leading to monoubiquitination. Interacts with KLHL12. Post-translationally, monoubiquitinated by the BCR(KLHL12) E3 ubiquitin ligase complex, leading to regulate the size of COPII coats.

The protein resides in the cytoplasm. It localises to the cytoplasmic vesicle. It is found in the COPII-coated vesicle membrane. Its subcellular location is the endoplasmic reticulum membrane. Its function is as follows. Component of the coat protein complex II (COPII) which promotes the formation of transport vesicles from the endoplasmic reticulum (ER). The coat has two main functions, the physical deformation of the endoplasmic reticulum membrane into vesicles and the selection of cargo molecules. This Pongo abelii (Sumatran orangutan) protein is Protein transport protein Sec31A (SEC31A).